The following is a 455-amino-acid chain: Bifunctional protein GlmU (455 aa).

Positions 1–228 (MYKCALVLAA…YEETIGVNSR (228 aa)) are pyrophosphorylase. UDP-N-acetyl-alpha-D-glucosamine is bound by residues 8 to 11 (LAAG), Lys22, Gln73, and 78 to 79 (GT). Residue Asp103 participates in Mg(2+) binding. UDP-N-acetyl-alpha-D-glucosamine is bound by residues Gly140, Glu154, Asn169, and Asn226. Residue Asn226 participates in Mg(2+) binding. Residues 229–249 (VQLAEAEEILKNRINLMHMEN) form a linker region. The N-acetyltransferase stretch occupies residues 250-455 (GVTLIDPRTT…GWVDKKGLKK (206 aa)). Positions 331 and 349 each coordinate UDP-N-acetyl-alpha-D-glucosamine. His361 (proton acceptor) is an active-site residue. Residues Tyr364 and Asn375 each coordinate UDP-N-acetyl-alpha-D-glucosamine. Acetyl-CoA-binding positions include 384–385 (NY), Ala421, and Arg438.

The protein in the N-terminal section; belongs to the N-acetylglucosamine-1-phosphate uridyltransferase family. It in the C-terminal section; belongs to the transferase hexapeptide repeat family. Homotrimer. Mg(2+) is required as a cofactor.

Its subcellular location is the cytoplasm. It carries out the reaction alpha-D-glucosamine 1-phosphate + acetyl-CoA = N-acetyl-alpha-D-glucosamine 1-phosphate + CoA + H(+). The catalysed reaction is N-acetyl-alpha-D-glucosamine 1-phosphate + UTP + H(+) = UDP-N-acetyl-alpha-D-glucosamine + diphosphate. Its pathway is nucleotide-sugar biosynthesis; UDP-N-acetyl-alpha-D-glucosamine biosynthesis; N-acetyl-alpha-D-glucosamine 1-phosphate from alpha-D-glucosamine 6-phosphate (route II): step 2/2. It functions in the pathway nucleotide-sugar biosynthesis; UDP-N-acetyl-alpha-D-glucosamine biosynthesis; UDP-N-acetyl-alpha-D-glucosamine from N-acetyl-alpha-D-glucosamine 1-phosphate: step 1/1. It participates in bacterial outer membrane biogenesis; LPS lipid A biosynthesis. In terms of biological role, catalyzes the last two sequential reactions in the de novo biosynthetic pathway for UDP-N-acetylglucosamine (UDP-GlcNAc). The C-terminal domain catalyzes the transfer of acetyl group from acetyl coenzyme A to glucosamine-1-phosphate (GlcN-1-P) to produce N-acetylglucosamine-1-phosphate (GlcNAc-1-P), which is converted into UDP-GlcNAc by the transfer of uridine 5-monophosphate (from uridine 5-triphosphate), a reaction catalyzed by the N-terminal domain. This Clostridium beijerinckii (strain ATCC 51743 / NCIMB 8052) (Clostridium acetobutylicum) protein is Bifunctional protein GlmU.